We begin with the raw amino-acid sequence, 139 residues long: MMKILVCLPLLTLYAGCVYGIATGNPVSRLVTETLSLITAHRTLLIGNGTLRISIPDPQNHPLCIEEIFQGIETLKNQTAEENVVEKIFQNLSSLKGYITAKEKQCGGERRRVEQFLDYLEEFLRTINIEWNTEWTVES.

Positions 1–19 (MMKILVCLPLLTLYAGCVY) are cleaved as a signal peptide. N-linked (GlcNAc...) asparagine glycans are attached at residues Asn-48, Asn-77, and Asn-91.

Belongs to the IL-5 family. In terms of assembly, homodimer; disulfide-linked. Interacts with IL5RA. Interacts with CSF2RB.

The protein localises to the secreted. In terms of biological role, homodimeric cytokine expressed predominantly by T-lymphocytes and NK cells that plays an important role in the survival, differentiation, and chemotaxis of eosinophils. Also acts on activated and resting B-cells to induce immunoglobulin production, growth, and differentiation. Mechanistically, exerts its biological effects through a receptor composed of IL5RA subunit and the cytokine receptor common subunit beta/CSF2RB. Binding to the receptor leads to activation of various kinases including LYN, SYK and JAK2 and thereby propagates signals through the RAS-MAPK and JAK-STAT5 pathways respectively. The sequence is that of Interleukin-5 (IL5) from Notamacropus eugenii (Tammar wallaby).